A 103-amino-acid chain; its full sequence is Urease subunit gamma (103 aa).

This sequence belongs to the urease gamma subunit family. In terms of assembly, heterotrimer of UreA (gamma), UreB (beta) and UreC (alpha) subunits. Three heterotrimers associate to form the active enzyme.

It localises to the cytoplasm. It carries out the reaction urea + 2 H2O + H(+) = hydrogencarbonate + 2 NH4(+). The protein operates within nitrogen metabolism; urea degradation; CO(2) and NH(3) from urea (urease route): step 1/1. This chain is Urease subunit gamma, found in Paracoccus denitrificans (strain Pd 1222).